The primary structure comprises 21 residues: Magainin-B1 (21 aa).

In terms of tissue distribution, expressed by the skin glands.

It is found in the secreted. Has no antimicrobial activity against tested bacteria. The sequence is that of Magainin-B1 from Xenopus borealis (Kenyan clawed frog).